An 880-amino-acid polypeptide reads, in one-letter code: Pyruvate, phosphate dikinase (880 aa).

Residues 1–348 (MNKLIYYFGN…LYILQTRTAK (348 aa)) form an N-terminal region. Arginine 97 is an ATP binding site. A linker 1 region spans residues 349–405 (RTAIAAINIAVQMVKEKLISKEQALMRIDPESLNQLLHTRIDYSKGLTSIAEGLPAS). Residues 406–503 (PGAATGIVVF…VIKQGDIITI (98 aa)) are central. Threonine 458 carries the phosphothreonine; by PDRP1 modification. Catalysis depends on histidine 460, which acts as the Tele-phosphohistidine intermediate. The linker 2 stretch occupies residues 504–538 (DGGSGKIFLGEMPLIQPTFSEESKLILDWADEISS). Residues 539-880 (LKVRANAETV…AAQAKIKQGS (342 aa)) are C-terminal. Substrate contacts are provided by arginine 566, arginine 622, glutamate 750, glycine 771, threonine 772, asparagine 773, and aspartate 774. Position 750 (glutamate 750) interacts with Mg(2+). Residue aspartate 774 coordinates Mg(2+). Residue cysteine 836 is the Proton donor of the active site.

Belongs to the PEP-utilizing enzyme family. As to quaternary structure, homodimer. The cofactor is Mg(2+). Phosphorylation of Thr-458 in the dark inactivates the enzyme. Dephosphorylation upon light stimulation reactivates the enzyme.

The enzyme catalyses pyruvate + phosphate + ATP = phosphoenolpyruvate + AMP + diphosphate + H(+). Activated by light-induced dephosphorylation. Inhibited by dark-induced phosphorylation. Both reactions are catalyzed by PDRP1. Catalyzes the reversible phosphorylation of pyruvate and phosphate. This chain is Pyruvate, phosphate dikinase (ppdK), found in Rickettsia prowazekii (strain Madrid E).